The following is a 249-amino-acid chain: 5'-nucleotidase SurE (249 aa).

D8, D9, S39, and N91 together coordinate a divalent metal cation.

The protein belongs to the SurE nucleotidase family. A divalent metal cation serves as cofactor.

The protein resides in the cytoplasm. It catalyses the reaction a ribonucleoside 5'-phosphate + H2O = a ribonucleoside + phosphate. In terms of biological role, nucleotidase that shows phosphatase activity on nucleoside 5'-monophosphates. The protein is 5'-nucleotidase SurE of Pseudomonas fluorescens (strain Pf0-1).